The following is a 369-amino-acid chain: DNA replication and repair protein RecF (369 aa).

An ATP-binding site is contributed by G30–T37.

This sequence belongs to the RecF family.

It localises to the cytoplasm. Functionally, the RecF protein is involved in DNA metabolism; it is required for DNA replication and normal SOS inducibility. RecF binds preferentially to single-stranded, linear DNA. It also seems to bind ATP. The sequence is that of DNA replication and repair protein RecF from Streptococcus agalactiae serotype Ia (strain ATCC 27591 / A909 / CDC SS700).